Here is a 170-residue protein sequence, read N- to C-terminus: Peptide deformylase 1 (170 aa).

Fe cation-binding residues include Cys92 and His135. Glu136 is an active-site residue. Residue His139 participates in Fe cation binding.

Belongs to the polypeptide deformylase family. Fe(2+) serves as cofactor.

The enzyme catalyses N-terminal N-formyl-L-methionyl-[peptide] + H2O = N-terminal L-methionyl-[peptide] + formate. Its function is as follows. Removes the formyl group from the N-terminal Met of newly synthesized proteins. Requires at least a dipeptide for an efficient rate of reaction. N-terminal L-methionine is a prerequisite for activity but the enzyme has broad specificity at other positions. This is Peptide deformylase 1 from Coxiella burnetii (strain RSA 493 / Nine Mile phase I).